Reading from the N-terminus, the 90-residue chain is Conotoxin Rg9.1 (90 aa).

The first 20 residues, 1–20 (MHLSLARSAVLILLLLFALG), serve as a signal peptide directing secretion. Positions 21-60 (NFVGVQPGQITRDADHGINLRSLRKQMSRSPLVKGAFCGQ) are excised as a propeptide. 3 disulfides stabilise this stretch: C58–C71, C62–C73, and C67–C80.

The protein belongs to the conotoxin P superfamily. Expressed by the venom duct.

It localises to the secreted. Probable neurotoxin that inhibits ion channels. This Conus regius (Crown cone) protein is Conotoxin Rg9.1.